A 106-amino-acid chain; its full sequence is UPF0145 protein AZOSEA16190 (106 aa).

It belongs to the UPF0145 family.

In Aromatoleum aromaticum (strain DSM 19018 / LMG 30748 / EbN1) (Azoarcus sp. (strain EbN1)), this protein is UPF0145 protein AZOSEA16190.